A 431-amino-acid polypeptide reads, in one-letter code: Enolase (431 aa).

Residue Gln167 coordinates (2R)-2-phosphoglycerate. The active-site Proton donor is the Glu209. Mg(2+) is bound by residues Asp246, Glu289, and Asp316. (2R)-2-phosphoglycerate-binding residues include Lys341, Arg370, Ser371, and Lys392. Lys341 acts as the Proton acceptor in catalysis.

The protein belongs to the enolase family. In terms of assembly, component of the RNA degradosome, a multiprotein complex involved in RNA processing and mRNA degradation. Mg(2+) serves as cofactor.

It is found in the cytoplasm. The protein resides in the secreted. The protein localises to the cell surface. The enzyme catalyses (2R)-2-phosphoglycerate = phosphoenolpyruvate + H2O. It participates in carbohydrate degradation; glycolysis; pyruvate from D-glyceraldehyde 3-phosphate: step 4/5. Functionally, catalyzes the reversible conversion of 2-phosphoglycerate (2-PG) into phosphoenolpyruvate (PEP). It is essential for the degradation of carbohydrates via glycolysis. This chain is Enolase, found in Shewanella woodyi (strain ATCC 51908 / MS32).